Here is a 213-residue protein sequence, read N- to C-terminus: Phosphatidylethanolamine N-methyltransferase A (213 aa).

Over 1–21 the chain is Lumenal; the sequence is MIVEHAIDYIDYLMNYVDFTE. Residues 22–42 constitute an intramembrane region (helical); sequence KYFLLTIACVVFNPTWWNITA. Over 43–54 the chain is Lumenal; it reads RMEYKTKFMTKI. The helical transmembrane segment at 55 to 75 threads the bilayer; that stretch reads CGSKENGCYLLAFLIFSLGIL. At 76 to 102 the chain is on the cytoplasmic side; it reads RDWLFSEALIRQPIFQEFDRFEVEVLS. A helical membrane pass occupies residues 103–123; the sequence is YILYGFGGILVLAAYLKLGIT. S-adenosyl-L-methionine is bound at residue 107 to 109; it reads GFG. The Lumenal segment spans residues 124-166; it reads GTYLGDYFGILMKERVTGFPFNVMNNPMYNGSVMLFIAHALSY. Residues 167–187 traverse the membrane as a helical segment; that stretch reads KSVAGLVLSFVVYVVYKFALI. The Cytoplasmic portion of the chain corresponds to 188-213; the sequence is FEESFTNYIYSTAAANAAKKNKSKSK. Position 189-190 (189-190) interacts with S-adenosyl-L-methionine; sequence EE.

Belongs to the class VI-like SAM-binding methyltransferase superfamily. PEMT/PEM2 methyltransferase family.

Its subcellular location is the endoplasmic reticulum membrane. It is found in the mitochondrion membrane. It carries out the reaction a 1,2-diacyl-sn-glycero-3-phospho-N-methylethanolamine + S-adenosyl-L-methionine = a 1,2-diacyl-sn-glycero-3-phospho-N,N-dimethylethanolamine + S-adenosyl-L-homocysteine + H(+). It catalyses the reaction a 1,2-diacyl-sn-glycero-3-phospho-N,N-dimethylethanolamine + S-adenosyl-L-methionine = a 1,2-diacyl-sn-glycero-3-phosphocholine + S-adenosyl-L-homocysteine + H(+). The enzyme catalyses a 1,2-diacyl-sn-glycero-3-phosphoethanolamine + S-adenosyl-L-methionine = a 1,2-diacyl-sn-glycero-3-phospho-N-methylethanolamine + S-adenosyl-L-homocysteine + H(+). It participates in phospholipid metabolism; phosphatidylcholine biosynthesis. In terms of biological role, catalyzes the three sequential steps of the methylation pathway of phosphatidylcholine biosynthesis, the SAM-dependent methylation of phosphatidylethanolamine (PE) to phosphatidylmonomethylethanolamine (PMME), PMME to phosphatidyldimethylethanolamine (PDME), and PDME to phosphatidylcholine (PC). The sequence is that of Phosphatidylethanolamine N-methyltransferase A (pemtA) from Dictyostelium discoideum (Social amoeba).